The chain runs to 463 residues: Vacuolar cation/proton exchanger 1 (463 aa).

At Ala-2 the chain carries N-acetylalanine. Over 2 to 68 (AGIVTEPWSV…LKDFLSNLQE (67 aa)) the chain is Cytoplasmic. Residues 25–33 (SRELRLGRT) are required for autoinhibitory regulation. Residues 56-62 (YKGLKDF) are required for interaction with autoinhibitory region. A helical membrane pass occupies residues 69–89 (VILGTKLAILFPAIPAAIICT). The interval 87–95 (ICTYCGVSQ) is required for Ca(2+)/H(+) exchange activity. Residues 90-96 (YCGVSQP) are Extracellular-facing. A helical transmembrane segment spans residues 97–116 (WIFGLSLLGLTPLAERVSFL). At 117–127 (TEQLAFYTGPT) the chain is on the cytoplasmic side. The helical transmembrane segment at 128–148 (LGGLLNATCGNATELIIAILA) threads the bilayer. Residues 137–172 (GNATELIIAILALTNNKVAVVKYSLLGSILSNLLLV) are cation selection. Residues 149-161 (LTNNKVAVVKYSL) are Extracellular-facing. The chain crosses the membrane as a helical span at residues 162–182 (LGSILSNLLLVLGTSLFCGGI). Residues 183 to 197 (ANIRREQRFDRKQAD) are Cytoplasmic-facing. The helical transmembrane segment at 198–218 (VNFFLLLLGFLCHLLPLLVGY) threads the bilayer. Residues 219–238 (LKNGEASAAVLSDMQLSISR) are Extracellular-facing. A helical membrane pass occupies residues 239–259 (GFSIVMLISYIAYLVFQLWTH). Topologically, residues 260 to 281 (RQLFDAQEQEDEYDDDVEQETA) are cytoplasmic. The chain crosses the membrane as a helical span at residues 282–302 (VISFWSGFAWLVGMTLVIALL). Topologically, residues 303 to 325 (SEYVVATIEEASDKWNLSVSFIS) are extracellular. Asn-318 carries N-linked (GlcNAc...) asparagine glycosylation. Residues 326–346 (IILLPIVGNAAEHAGAVIFAF) form a helical membrane-spanning segment. Positions 333 to 368 (GNAAEHAGAVIFAFKNKLDISLGVALGSATQIGLFV) are cation selection. Topologically, residues 347 to 360 (KNKLDISLGVALGS) are cytoplasmic. Residues 361 to 381 (ATQIGLFVVPLTIIVAWILGI) traverse the membrane as a helical segment. Residues 382 to 384 (NMD) lie on the Extracellular side of the membrane. The chain crosses the membrane as a helical span at residues 385 to 405 (LNFGPLETGCLAVSIIITAFT). The Cytoplasmic segment spans residues 406–411 (LQDGSS). Residues 412 to 432 (HYMKGLVLLLCYFIIAICFFV) traverse the membrane as a helical segment. The Extracellular portion of the chain corresponds to 433–463 (DKLPQKQNAIHLGHQAMNNVVTATGGGVFSS).

Belongs to the Ca(2+):cation antiporter (CaCA) (TC 2.A.19) family. Cation/proton exchanger (CAX) subfamily. As to quaternary structure, interacts with GRXS14 and CXIP4. In terms of tissue distribution, expressed at low levels in leaves, stems and flowers.

The protein localises to the vacuole membrane. Activated by monothiol glutaredoxin GRXS14 and CXIP4. Inhibited by excess of Ca(2+) and Cd(2+), Na(+) and K(+), but not Mn(2+). Vacuolar cation/proton exchanger (CAX). Translocates Ca(2+) and other metal ions into vacuoles using the proton gradient formed by H(+)-ATPase and H(+)-pyrophosphatase. Involved in ion homeostasis in association with CAX3. May play a role in cold-acclimation response. This Arabidopsis thaliana (Mouse-ear cress) protein is Vacuolar cation/proton exchanger 1 (CAX1).